The following is a 512-amino-acid chain: FACT complex subunit pob3 (512 aa).

A compositionally biased stretch (acidic residues) spans 460–504 (LDDEDEEGDEEMEEALSEDEDFQAESESDVAEEYDENAESSDEEG). Residues 460 to 512 (LDDEDEEGDEEMEEALSEDEDFQAESESDVAEEYDENAESSDEEGASGAEGSE) are disordered.

The protein belongs to the SSRP1 family. Forms a stable heterodimer with spt16. The spt16-pob3 dimer weakly associates with multiple molecules of nhp6 to form the FACT complex. Interacts with abo1.

It localises to the nucleus. Its subcellular location is the chromosome. In terms of biological role, component of the FACT complex, a general chromatin factor that acts to reorganize nucleosomes. The FACT complex is involved in multiple processes that require DNA as a template such as mRNA elongation, DNA replication and DNA repair. During transcription elongation the FACT complex acts as a histone chaperone that both destabilizes and restores nucleosomal structure. It facilitates the passage of RNA polymerase II and transcription by promoting the dissociation of one histone H2A-H2B dimer from the nucleosome, then subsequently promotes the reestablishment of the nucleosome following the passage of RNA polymerase II. This Schizosaccharomyces pombe (strain 972 / ATCC 24843) (Fission yeast) protein is FACT complex subunit pob3.